A 373-amino-acid chain; its full sequence is Stationary phase protein 5 (373 aa).

Required for survival at high temperature during stationary phase. This chain is Stationary phase protein 5 (SPG5), found in Saccharomyces cerevisiae (strain ATCC 204508 / S288c) (Baker's yeast).